We begin with the raw amino-acid sequence, 1727 residues long: MGQTLTTPLSLTLTHFSDVRARAHNLSVGVRKGRWQTFCSSEWPTLHVGWPRDGTFDLSVILQVKTKVMDPGPHGHPDQVAYIITWEDLVRNPPPWVKPFLHTPSTSKSTLLALEVPKNRTLDPPKPVLPDESQQDLLFQDPLPHPPHNPLLEPPPYNSPSPPVLSPVSPTTPSAPTPSSLVSSSTPPSSPAPPELTPRTPPQTPRLRLRRAEGQDGPSTWQSSLFPLRTVNRTIQYWPFSASDLYNWKTHNPSFSQDPQALTSLIESILLTHQPTWDDCQQLLQVLLTTEERQRVLLEARKNVPGPGGLPTQLPNEIDEGFPLTRPDWDYETAPGRESLRIYRQALLAGLKGAGKRPTNLAKVRTITQGKDESPAAFMERLLEGFRMYTPFDPEAPEHKATVAMSFIDQAALDIKGKLQRLDGIQTHGLQELVREAEKVYNKRETPEEREARLIKEQEEREDRRDRKRDKHLTKILAAVVTEKRAGKSGETRRRPKVDKDQCAYCKERGHWIKDCPKRPRDQKKPAPVLTLGEDSEQGCQGSGAPPEPRLTLSVGGHPTTFLVDTGAQHSVLTKANGPLSSRTSWVQGATGRKMHKWTNRRTVNLGQGMVTHSFLVVPECPYPLLGRDLLTKLGAQIHFSEAGAQVLDRDGQPIQILTVSLQDEHRLFDIPVTTSLPDVWLQDFPQAWAETGGLGRAKCQAPIIIDLKPTAVPVSIKQYPMSLEAHMGIRQHIIKFLELGVLRPCRSPWNTPLLPVKKPGTQDYRPVQDLREINKRTVDIHPTVPNPYNLLSTLKPDYSWYTVLDLKDAFFCLPLAPQSQELFAFEWKDPERGISGQLTWTRLPQGFKNSPTLFDEALHRDLTDFRTQHPEVTLLQYVDDLLLAAPTKKACTQGTRHLLQELGEKGYRASAKKAQICQTKVTYLGYILSEGKRWLTPGRIETVARIPPPRNPREVREFLGTAGFCRLWIPGFAELAAPLYALTKESTPFTWQTEHQLAFEALKKALLSAPALGLPDTSKPFTLFLDERQGIAKGVLTQKLGPWKRPVAYLSKKLDPVAAGWPPCLRIMAATAMLVKDSAKLTLGQPLTVITPHTLEAIVRQPPDRWITNARLTHYQALLLDTDRVQFGPPVTLNPATLLPVPENQPSPHDCRQVLAETHGTREDLKDQELPDADHTWYTDGSSYLDSGTRRAGAAVVDGHNTIWAQSLPPGTSAQKAELIALTKALELSKGKKANIYTDSRYAFATAHTHGSIYERRGLLTSEGKEIKNKAEIIALLKALFLPQEVAIIHCPGHQKGQDPVAVGNRQADRVARQAAMAEVLTLATEPDNTSHITIEHTYTSEDQEEARAIGATENKDTRNWEKEGKIVLPQKEALAMIQQMHAWTHLGNRKLKLLIEKTDFLIPRASTLIEQVTSACKVCQQVNAGATRVPAGKRTRGNRPGVYWEIDFTEVKPHYAGYKYLLVFVDTFSGWVEAFPTRQETAHIVAKKILEEIFPRFGLPKVIGSDNGPAFVSQVSQGLARILGINWKLHCAYRPQSSGQVERMNRTIKETLTKLTLETGLKDWRRLLSLALLRARNTPNRFGLTPYEILYGGPPPLSTLLNSFSPSNSKTDLQARLKGLQAVQAQIWAPLAELYRPGHSQTSHPFQVGDSVYVRRHRSQGLEPRWKGPYIVLLTTPTAIKVDGIATWIHASHAKAAPGTPGPTSSGTWRLRRSEDPLKIRLSRT.

G2 carries N-myristoyl glycine; by host lipidation. The PTAP/PSAP motif signature appears at 109-112; the sequence is STLL. An LYPX(n)L motif motif is present at residues 128 to 132; sequence VLPDE. 4 disordered regions span residues 137–221, 302–322, 443–471, and 515–547; these read LLFQ…PSTW, KNVP…DEGF, KRET…KRDK, and DCPK…GAPP. Pro residues predominate over residues 143-165; the sequence is LPHPPHNPLLEPPPYNSPSPPVL. A PPXY motif motif is present at residues 154-157; the sequence is PPPY. Residues 166 to 187 are compositionally biased toward low complexity; the sequence is SPVSPTTPSAPTPSSLVSSSTP. The segment covering 188–204 has biased composition (pro residues); it reads PSSPAPPELTPRTPPQT. Composition is skewed to basic and acidic residues over residues 443–465 and 515–525; these read KRET…EDRR and DCPKRPRDQKK. Residues 501–518 form a CCHC-type zinc finger; the sequence is DQCAYCKERGHWIKDCPK. A Peptidase A2 domain is found at 560-630; that stretch reads TTFLVDTGAQ…CPYPLLGRDL (71 aa). Residue D565 is the Protease; shared with dimeric partner of the active site. A Reverse transcriptase domain is found at 736–929; that stretch reads KFLELGVLRP…TKVTYLGYIL (194 aa). Mg(2+)-binding residues include D806, D880, D881, D1181, E1219, D1240, and D1310. Positions 1172 to 1318 constitute an RNase H type-1 domain; it reads PDADHTWYTD…ADRVARQAAM (147 aa). The segment at 1383-1421 adopts an HHCC-type zinc-finger fold; the sequence is HAWTHLGNRKLKLLIEKTDFLIPRASTLIEQVTSACKVC. In terms of domain architecture, Integrase catalytic spans 1438–1596; the sequence is RGNRPGVYWE…TPYEILYGGP (159 aa). Mg(2+) is bound by residues D1449 and D1508.

Belongs to the retroviral Pol polyprotein family. In terms of assembly, homohexamer; further associates as homomultimer. The virus core is composed of a lattice formed from hexagonal rings, each containing six capsid monomers. As to quaternary structure, interacts (via PPXY motif) with host NEDD4. Interacts (via PSAP motif) with host TSG101. Interacts (via LYPX(n)L motif) with host PDCD6IP. The reverse transcriptase is a monomer (Potential). Interacts (via RNase domains) with host release factor ETF1; this interaction is essential for translational readthrough of amber codon between viral gag and pol genes, as well as for viral replication. In terms of assembly, homodimer. It depends on Mg(2+) as a cofactor. In terms of processing, specific enzymatic cleavages by the viral protease yield mature proteins. The protease is released by autocatalytic cleavage. The polyprotein is cleaved during and after budding, this process is termed maturation. Post-translationally, phosphorylated on serine residues.

It is found in the virion. It localises to the host cell membrane. The protein resides in the host late endosome membrane. Its subcellular location is the host endosome. The protein localises to the host multivesicular body. It is found in the host cytoplasm. The catalysed reaction is DNA(n) + a 2'-deoxyribonucleoside 5'-triphosphate = DNA(n+1) + diphosphate. It catalyses the reaction Endonucleolytic cleavage to 5'-phosphomonoester.. With respect to regulation, most efficiently inhibited by Amprenavir, which is able to block Gag-Pol processing in infected cells. Its function is as follows. Plays a role in budding and is processed by the viral protease during virion maturation outside the cell. During budding, it recruits, in a PPXY-dependent or independent manner, Nedd4-like ubiquitin ligases that conjugate ubiquitin molecules to Gag-Pol, or to Gag-Pol binding host factors. Interaction with HECT ubiquitin ligases probably links the viral protein to the host ESCRT pathway and facilitates release. Targets Gag and gag-pol polyproteins to the plasma membrane via a multipartite membrane binding signal, that includes its myristoylated N-terminus. Also mediates nuclear localization of the pre-integration complex. In terms of biological role, constituent of the pre-integration complex (PIC) which tethers the latter to mitotic chromosomes. This allows the integration of the viral genome into the host DNA. Functionally, forms the spherical core of the virion that encapsulates the genomic RNA-nucleocapsid complex. Its function is as follows. Involved in the packaging and encapsidation of two copies of the genome. Binds with high affinity to conserved UCUG elements within the packaging signal, located near the 5'-end of the genome. This binding is dependent on genome dimerization. Acts as a nucleic acid chaperone which is involved in rearrangement of nucleic acid secondary structures during gRNA retrotranscription. The aspartyl protease mediates proteolytic cleavages of Gag and Gag-Pol polyproteins during or shortly after the release of the virion from the plasma membrane. Cleavages take place as an ordered, step-wise cascade to yield mature proteins. This process is called maturation. Displays maximal activity during the budding process just prior to particle release from the cell. In terms of biological role, RT is a multifunctional enzyme that converts the viral dimeric RNA genome into dsDNA in the cytoplasm, shortly after virus entry into the cell. This enzyme displays a DNA polymerase activity that can copy either DNA or RNA templates, and a ribonuclease H (RNase H) activity that cleaves the RNA strand of RNA-DNA heteroduplexes in a partially processive 3' to 5' endonucleasic mode. Conversion of viral genomic RNA into dsDNA requires many steps. A tRNA binds to the primer-binding site (PBS) situated at the 5' end of the viral RNA. RT uses the 3' end of the tRNA primer to perform a short round of RNA-dependent minus-strand DNA synthesis. The reading proceeds through the U5 region and ends after the repeated (R) region which is present at both ends of viral RNA. The portion of the RNA-DNA heteroduplex is digested by the RNase H, resulting in a ssDNA product attached to the tRNA primer. This ssDNA/tRNA hybridizes with the identical R region situated at the 3' end of viral RNA. This template exchange, known as minus-strand DNA strong stop transfer, can be either intra- or intermolecular. RT uses the 3' end of this newly synthesized short ssDNA to perform the RNA-dependent minus-strand DNA synthesis of the whole template. RNase H digests the RNA template except for a polypurine tract (PPT) situated at the 5' end of the genome. It is not clear if both polymerase and RNase H activities are simultaneous. RNase H probably can proceed both in a polymerase-dependent (RNA cut into small fragments by the same RT performing DNA synthesis) and a polymerase-independent mode (cleavage of remaining RNA fragments by free RTs). Secondly, RT performs DNA-directed plus-strand DNA synthesis using the PPT that has not been removed by RNase H as primers. PPT and tRNA primers are then removed by RNase H. The 3' and 5' ssDNA PBS regions hybridize to form a circular dsDNA intermediate. Strand displacement synthesis by RT to the PBS and PPT ends produces a blunt ended, linear dsDNA copy of the viral genome that includes long terminal repeats (LTRs) at both ends. Functionally, catalyzes viral DNA integration into the host chromosome, by performing a series of DNA cutting and joining reactions. This enzyme activity takes place after virion entry into a cell and reverse transcription of the RNA genome in dsDNA. The first step in the integration process is 3' processing. This step requires a complex comprising the viral genome, matrix protein and integrase. This complex is called the pre-integration complex (PIC). The integrase protein removes 2 nucleotides from each 3' end of the viral DNA, leaving recessed CA OH's at the 3' ends. In the second step that requires cell division, the PIC enters cell nucleus. In the third step, termed strand transfer, the integrase protein joins the previously processed 3' ends to the 5' ends of strands of target cellular DNA at the site of integration. The last step is viral DNA integration into host chromosome. The protein is Gag-Pol polyprotein (pol) of Papio (baboons).